Here is a 617-residue protein sequence, read N- to C-terminus: Chaperone protein DnaK (617 aa).

Position 175 is a phosphothreonine; by autocatalysis (Thr175). Positions 578 to 592 (AGAEAQQGAQGTQGA) are enriched in low complexity. Residues 578–617 (AGAEAQQGAQGTQGADMGGNAQGKDDDNVVDADFKVEDDK) are disordered. Over residues 600 to 617 (GKDDDNVVDADFKVEDDK) the composition is skewed to basic and acidic residues.

The protein belongs to the heat shock protein 70 family.

In terms of biological role, acts as a chaperone. This Clostridium novyi (strain NT) protein is Chaperone protein DnaK.